A 178-amino-acid polypeptide reads, in one-letter code: Caveolin-1 (178 aa).

Ser2 is subject to N-acetylserine. Ser2 bears the Phosphoserine mark. The segment at 2 to 94 (SGGKYIDSEG…WKASFTTFTV (93 aa)) is required for homooligomerization. Residues 2–104 (SGGKYIDSEG…TKYWFYRLLS (103 aa)) lie on the Cytoplasmic side of the membrane. Lys5 bears the N6-acetyllysine; alternate mark. Lys5 participates in a covalent cross-link: Glycyl lysine isopeptide (Lys-Gly) (interchain with G-Cter in ubiquitin); alternate. At Tyr6 the chain carries Phosphotyrosine. Ser9 carries the post-translational modification Phosphoserine. Position 14 is a phosphotyrosine; by ABL1 (Tyr14). Tyr25 is modified (phosphotyrosine). Residues Lys26, Lys30, Lys39, Lys47, and Lys57 each participate in a glycyl lysine isopeptide (Lys-Gly) (interchain with G-Cter in ubiquitin) cross-link. An interaction with CAVIN3 region spans residues 82–94 (DGIWKASFTTFTV). An intramembrane region (helical) is located at residues 105-125 (ALFGIPMALIWGIYFAILSFL). Topologically, residues 126-178 (HIWAVVPCIRSYLIEIQCISRIYSICIHTFCDPLFEAIGKIFSNVRIALQKEI) are cytoplasmic. Residues 131–142 (VPCIRSYLIEIQ) form an interacts with SPRY1, SPRY2, SPRY3 and SPRY4 region. 3 S-palmitoyl cysteine lipidation sites follow: Cys133, Cys143, and Cys156. Positions 149–160 (SICIHTFCDPLF) are interacts with SPRY1, SPRY2, and SPRY4. The interval 167-178 (FSNVRIALQKEI) is interacts with SPRY1, SPRY2, SPRY3 and SPRY4.

Belongs to the caveolin family. As to quaternary structure, homooligomer. Interacts with GLIPR2. Interacts with NOSTRIN. Interacts with SNAP25 and STX1A. Interacts (via the N-terminus) with DPP4; the interaction is direct. Interacts with CTNNB1, CDH1 and JUP. Interacts with PACSIN2; this interaction induces membrane tubulation. Interacts with SLC7A9. Interacts with BMX and BTK. Interacts with TGFBR1. Interacts with CAVIN3 (via leucine-zipper domain) in a cholesterol-sensitive manner. Interacts with CAVIN1. Interacts with EHD2 in a cholesterol-dependent manner. Forms a ternary complex with UBXN6 and VCP; mediates CAV1 targeting to lysosomes for degradation. Interacts with ABCG1; this interaction regulates ABCG1-mediated cholesterol efflux. Interacts with NEU3; this interaction enhances NEU3 sialidase activity within caveola. Interacts (via C-terminus) with SPRY1, SPRY2 (via C-terminus), SPRY3, and SPRY4. Interacts with IGFBP5; this interaction allows trafficking of IGFBP5 from the plasma membrane to the nucleus. Post-translationally, phosphorylated at Tyr-14 by ABL1 in response to oxidative stress. Ubiquitinated. Undergo monoubiquitination and multi- and/or polyubiquitination. Monoubiquitination of N-terminal lysines promotes integration in a ternary complex with UBXN6 and VCP which promotes oligomeric CAV1 targeting to lysosomes for degradation. Ubiquitinated by ZNRF1; leading to degradation and modulation of the TLR4-mediated immune response.

It is found in the golgi apparatus membrane. The protein resides in the cell membrane. The protein localises to the membrane. It localises to the caveola. Its subcellular location is the membrane raft. Its function is as follows. May act as a scaffolding protein within caveolar membranes. Forms a stable heterooligomeric complex with CAV2 that targets to lipid rafts and drives caveolae formation. Mediates the recruitment of CAVIN proteins (CAVIN1/2/3/4) to the caveolae. Interacts directly with G-protein alpha subunits and can functionally regulate their activity. Involved in the costimulatory signal essential for T-cell receptor (TCR)-mediated T-cell activation. Its binding to DPP4 induces T-cell proliferation and NF-kappa-B activation in a T-cell receptor/CD3-dependent manner. Recruits CTNNB1 to caveolar membranes and may regulate CTNNB1-mediated signaling through the Wnt pathway. Negatively regulates TGFB1-mediated activation of SMAD2/3 by mediating the internalization of TGFBR1 from membrane rafts leading to its subsequent degradation. Binds 20(S)-hydroxycholesterol (20(S)-OHC). The polypeptide is Caveolin-1 (CAV1) (Didelphis virginiana (North American opossum)).